Reading from the N-terminus, the 573-residue chain is Proline--tRNA ligase (573 aa).

Belongs to the class-II aminoacyl-tRNA synthetase family. ProS type 1 subfamily. In terms of assembly, homodimer.

The protein resides in the cytoplasm. The catalysed reaction is tRNA(Pro) + L-proline + ATP = L-prolyl-tRNA(Pro) + AMP + diphosphate. Functionally, catalyzes the attachment of proline to tRNA(Pro) in a two-step reaction: proline is first activated by ATP to form Pro-AMP and then transferred to the acceptor end of tRNA(Pro). As ProRS can inadvertently accommodate and process non-cognate amino acids such as alanine and cysteine, to avoid such errors it has two additional distinct editing activities against alanine. One activity is designated as 'pretransfer' editing and involves the tRNA(Pro)-independent hydrolysis of activated Ala-AMP. The other activity is designated 'posttransfer' editing and involves deacylation of mischarged Ala-tRNA(Pro). The misacylated Cys-tRNA(Pro) is not edited by ProRS. In Limosilactobacillus fermentum (strain NBRC 3956 / LMG 18251) (Lactobacillus fermentum), this protein is Proline--tRNA ligase.